The chain runs to 241 residues: Small ribosomal subunit protein uS3 (241 aa).

The 71-residue stretch at 39–109 folds into the KH type-2 domain; it reads IRQHVEKNLS…QIRINVIEVS (71 aa). The interval 215–241 is disordered; sequence EQAMAAPAPTPRKKRRPQQFEDRSNEE. Positions 232-241 are enriched in basic and acidic residues; the sequence is QQFEDRSNEE.

The protein belongs to the universal ribosomal protein uS3 family. In terms of assembly, part of the 30S ribosomal subunit. Forms a tight complex with proteins S10 and S14.

In terms of biological role, binds the lower part of the 30S subunit head. Binds mRNA in the 70S ribosome, positioning it for translation. The sequence is that of Small ribosomal subunit protein uS3 from Crocosphaera subtropica (strain ATCC 51142 / BH68) (Cyanothece sp. (strain ATCC 51142)).